Reading from the N-terminus, the 53-residue chain is uncharacterized protein (53 aa).

Its subcellular location is the plastid. The protein localises to the chloroplast. This is an uncharacterized protein from Guillardia theta (Cryptophyte).